The sequence spans 267 residues: Small ribosomal subunit protein uS2 (267 aa).

The interval 232–267 is disordered; it reads ATVREEEFADAPAEDAKPARRAPAKKAAADKGEAQA. Residues 258–267 show a composition bias toward basic and acidic residues; the sequence is AAADKGEAQA.

The protein belongs to the universal ribosomal protein uS2 family.

The protein is Small ribosomal subunit protein uS2 of Stenotrophomonas maltophilia (strain R551-3).